The primary structure comprises 405 residues: Potassium channel subfamily K member 18 (405 aa).

Residues 43–63 (LPGLCFLCCLVTYALVGAALF) traverse the membrane as a helical segment. A glycan (N-linked (GlcNAc...) asparagine) is linked at asparagine 94. An intramembrane region (pore-forming) is located at residues 125-151 (FLSALFFCCTVFSTVGYGHMYPVTRLG). Threonine 138, valine 139, glycine 140, and tyrosine 141 together coordinate K(+). Residues 138 to 143 (TVGYGH) form a selectivity filter 1 region. A helical membrane pass occupies residues 153 to 173 (FLCMLYALFGIPLMFLVLTDI). The tract at residues 221–226 (PQIVID) is interaction with calcineurin. The tract at residues 272–277 (RSNSCP) is interaction with YWHAH. Residues serine 275 and serine 287 each carry the phosphoserine modification. The helical transmembrane segment at 304-324 (IPLPVIALVIFAYISCAAAIL) threads the bilayer. An intramembrane region (pore-forming) is located at residues 337–351 (FYFCFVTLTTIGFGD). A selectivity filter 2 region spans residues 346–351 (TIGFGD). Residues 358-378 (HFFLFFSIYIIVGMEILFIAF) traverse the membrane as a helical segment.

This sequence belongs to the two pore domain potassium channel (TC 1.A.1.8) family. In terms of assembly, homodimer. Heterodimer with KCNK2. Heterodimer with KCNK10. Interacts with calcineurin. Interacts with YWHAH, in a phosphorylation-dependent manner. Phosphorylation of Ser-275 is required for the binding of 14-3-3eta/YWHAH. Calcineurin-mediated dephosphorylation of Ser-287 enhances channel activity. In terms of processing, N-glycosylated.

It localises to the cell membrane. It carries out the reaction K(+)(in) = K(+)(out). Activated by volatile anesthetics, such as isoflurane and inhibited by local anesthetics such as bupivacaine and lidocaine. Inhibited by extracellular acidic pH. Inhibited by Zn(2+) ions. Functionally, k(+) channel that conducts outward and inward rectifying currents at depolarized and hyperpolarized membrane potentials, respectively. The outward rectifying currents are voltage-dependent, coupled to K(+) electrochemical gradient across the membrane, whereas the inward currents can be induced in response to activation of Ca(2+)-mobilizing receptors. Homo- and heterodimerizes to form functional channels with distinct regulatory and gating properties. In trigeminal ganglia sensory neurons, the heterodimers of KCNK18/TRESK and KCNK2/TREK-1 or KCNK10/TREK-2 inhibit neuronal firing and neurogenic inflammation by stabilizing the resting membrane potential at K(+) equilibrium potential as well as by regulating the threshold of action potentials and the spike frequency. In thymocytes, conducts K(+) currents upon T cell receptor (TCR) signaling leading to sustained Ca(2+) influx and NF-kappa-B activation, FOXP3 transcription and positive selection of regulatory T cell (Treg) progenitor subsets. Appears to mediate the analgesics effects of hydroxy-alpha-sanshool, a metabolite naturally present in Schezuan pepper and other Xanthoxylum plants. In Rattus norvegicus (Rat), this protein is Potassium channel subfamily K member 18 (Kcnk18).